The chain runs to 113 residues: Gonadotropin subunit beta (113 aa).

6 cysteine pairs are disulfide-bonded: C6–C54, C20–C69, C23–C107, C31–C85, C35–C87, and C90–C97. N10 carries an N-linked (GlcNAc...) asparagine glycan.

Belongs to the glycoprotein hormones subunit beta family. As to quaternary structure, heterodimer of an alpha and a beta chain.

The protein resides in the secreted. Functionally, involved in gametogenesis and steroidogenesis. This chain is Gonadotropin subunit beta (cgb), found in Muraenesox cinereus (Daggertooth pike conger).